The sequence spans 61 residues: Photosystem II reaction center X protein (61 aa).

The helical transmembrane segment at 26–46 (IGSFIAAALLIVVPATAFLIF) threads the bilayer.

Belongs to the PsbX family. Type 2 subfamily. As to quaternary structure, PSII consists of a core antenna complex that captures photons, and an electron transfer chain that converts photonic excitation into a charge separation. PSII forms dimeric complexes.

The protein localises to the cellular thylakoid membrane. Functionally, involved in the binding and/or turnover of quinones at the Q(B) site of Photosystem II. This chain is Photosystem II reaction center X protein, found in Prochlorococcus marinus (strain AS9601).